The sequence spans 371 residues: N-acetyllactosaminide alpha-2,3-sialyltransferase (371 aa).

G255 provides a ligand contact to CMP-N-acetyl-beta-neuraminate. The Proton acceptor role is filled by D258. Residues 278 to 282 (APHPR), 299 to 300 (IE), and 322 to 323 (SG) contribute to the CMP-N-acetyl-beta-neuraminate site. H280 (proton donor) is an active-site residue.

This sequence belongs to the glycosyltransferase 52 family. In terms of assembly, homodimer.

The protein localises to the cell outer membrane. It carries out the reaction a beta-D-galactosyl-(1-&gt;4)-N-acetyl-beta-D-glucosaminyl derivative + CMP-N-acetyl-beta-neuraminate = an N-acetyl-alpha-neuraminyl-(2-&gt;3)-beta-D-galactosyl-(1-&gt;4)-N-acetyl-beta-D-glucosaminyl derivative + CMP + H(+). The protein operates within bacterial outer membrane biogenesis; lipooligosaccharide biosynthesis. Catalyzes the transfer of sialic acid from the substrate CMP-N-acetylneuraminate to the terminal galactose residue of the lacto-N-neotetraose branch of surface lipooligosaccharide (LOS), forming an alpha-2,3-sialyl linkage. Thus, functions in the sialylation of LOS, which plays a role in the evasion of the host immune response by protecting N.meningitidis from complement-mediated serum killing and from phagocytic killing by neutrophils. The chain is N-acetyllactosaminide alpha-2,3-sialyltransferase from Neisseria meningitidis serogroup A / serotype 4A (strain DSM 15465 / Z2491).